The primary structure comprises 396 residues: Ribosomal RNA large subunit methyltransferase I (396 aa).

Positions Thr-2 to Arg-81 constitute a PUA domain.

This sequence belongs to the methyltransferase superfamily. RlmI family.

Its subcellular location is the cytoplasm. It catalyses the reaction cytidine(1962) in 23S rRNA + S-adenosyl-L-methionine = 5-methylcytidine(1962) in 23S rRNA + S-adenosyl-L-homocysteine + H(+). Specifically methylates the cytosine at position 1962 (m5C1962) of 23S rRNA. The chain is Ribosomal RNA large subunit methyltransferase I from Serratia proteamaculans (strain 568).